We begin with the raw amino-acid sequence, 335 residues long: Arylacetonitrilase (335 aa).

The CN hydrolase domain occupies 6-291 (LKVAITQAQP…EGIVYADLDM (286 aa)). Glu-46 serves as the catalytic Proton acceptor. Lys-127 is a catalytic residue. Residue Cys-168 is the Nucleophile of the active site.

The protein belongs to the carbon-nitrogen hydrolase superfamily. Nitrilase family.

The enzyme catalyses a nitrile + 2 H2O = a carboxylate + NH4(+). It catalyses the reaction 4-chlorophenylacetonitrile + 2 H2O = 4-chlorophenylacetate + NH4(+). Nitrilase that hydrolyzes preferentially phenylacetonitrile, (R,S)-mandelonitrile, and 3-indolylacetonitrile. The polypeptide is Arylacetonitrilase (Arthroderma benhamiae (strain ATCC MYA-4681 / CBS 112371) (Trichophyton mentagrophytes)).